The following is an 85-amino-acid chain: Conotoxin Lt28.2 (85 aa).

Residues M1 to A21 form the signal peptide. A propeptide spanning residues V22–K40 is cleaved from the precursor.

The protein belongs to the conotoxin D superfamily. Contains 5 disulfide bonds. Expressed by the venom duct.

It localises to the secreted. In terms of biological role, probable neurotoxin. The polypeptide is Conotoxin Lt28.2 (Conus litteratus (Lettered cone)).